The following is a 283-amino-acid chain: Urease accessory protein UreD 2 (283 aa).

Residues 1 to 11 (MGRRAPDRLDR) show a composition bias toward basic and acidic residues. The tract at residues 1-30 (MGRRAPDRLDRGVTTTSPRTQAPPQAGRGV) is disordered. Over residues 13–23 (VTTTSPRTQAP) the composition is skewed to polar residues.

The protein belongs to the UreD family. UreD, UreF and UreG form a complex that acts as a GTP-hydrolysis-dependent molecular chaperone, activating the urease apoprotein by helping to assemble the nickel containing metallocenter of UreC. The UreE protein probably delivers the nickel.

It localises to the cytoplasm. Functionally, required for maturation of urease via the functional incorporation of the urease nickel metallocenter. In Saccharopolyspora erythraea (strain ATCC 11635 / DSM 40517 / JCM 4748 / NBRC 13426 / NCIMB 8594 / NRRL 2338), this protein is Urease accessory protein UreD 2.